A 207-amino-acid chain; its full sequence is MKLTILTKRFRSSSPLRTSGSPTDTNPATQGQSTQTARKAETKGSRHHPKSPAVRKRRPYGRRRSRSPRDTTLRRGEGESARASAGSGERVAFISPGDVGTSTRSPPKGGQSRLRRLIQEARDPPIICLKGGPNQLKCLRYRIKASNSSDFESISTTWHWVHNKCTDRVGHARMLVRFISTEQRDRFLDKVVVPKSVSVILGAFDGS.

The tract at residues 1–111 is disordered; sequence MKLTILTKRF…STRSPPKGGQ (111 aa). Residues 12 to 37 show a composition bias toward polar residues; sequence SSSPLRTSGSPTDTNPATQGQSTQTA. A compositionally biased stretch (basic residues) spans 45–66; it reads SRHHPKSPAVRKRRPYGRRRSR. A compositionally biased stretch (basic and acidic residues) spans 67–80; it reads SPRDTTLRRGEGES.

It belongs to the papillomaviridae E8^E2C protein family.

It localises to the host nucleus. In terms of biological role, plays a role in limiting the replication of viral DNA in keratinocytes. Recruits the host NCoR/SMRT complex to viral replication foci to mediate repression of both viral replication and transcription. The chain is Protein E8^E2C from Homo sapiens (Human).